We begin with the raw amino-acid sequence, 305 residues long: Energy-coupling factor transporter ATP-binding protein EcfA2 (305 aa).

The ABC transporter domain occupies 13 to 262; sequence LQNVDITFTN…KNLLQELLIE (250 aa). Residue 55–62 participates in ATP binding; the sequence is GSTGSGKS.

This sequence belongs to the ABC transporter superfamily. Energy-coupling factor EcfA family. Forms a stable energy-coupling factor (ECF) transporter complex composed of 2 membrane-embedded substrate-binding proteins (S component), 2 ATP-binding proteins (A component) and 2 transmembrane proteins (T component).

The protein localises to the cell membrane. Its function is as follows. ATP-binding (A) component of a common energy-coupling factor (ECF) ABC-transporter complex. Unlike classic ABC transporters this ECF transporter provides the energy necessary to transport a number of different substrates. This chain is Energy-coupling factor transporter ATP-binding protein EcfA2, found in Spiroplasma kunkelii.